A 599-amino-acid chain; its full sequence is Sulfite reductase [NADPH] flavoprotein alpha-component (599 aa).

One can recognise a Flavodoxin-like domain in the interval 64–202 (ITIISASQTG…AASEWRARVV (139 aa)). FMN is bound by residues 70–75 (SQTGNA), 117–120 (STQG), and 153–162 (LGDSSYEFFC). The FAD-binding FR-type domain maps to 234-448 (DAPLAASLSV…IEHNDNFRLP (215 aa)). Residues Thr322, Ala356, 386 to 389 (RLYS), 404 to 406 (TVG), Tyr410, and 419 to 422 (GGAS) contribute to the FAD site. NADP(+) is bound by residues 519 to 520 (SR), 525 to 529 (KIYVQ), and Asp561. Tyr599 contacts FAD.

It belongs to the NADPH-dependent sulphite reductase flavoprotein subunit CysJ family. The protein in the N-terminal section; belongs to the flavodoxin family. This sequence in the C-terminal section; belongs to the flavoprotein pyridine nucleotide cytochrome reductase family. In terms of assembly, alpha(8)-beta(8). The alpha component is a flavoprotein, the beta component is a hemoprotein. The cofactor is FAD. Requires FMN as cofactor.

It catalyses the reaction hydrogen sulfide + 3 NADP(+) + 3 H2O = sulfite + 3 NADPH + 4 H(+). The protein operates within sulfur metabolism; hydrogen sulfide biosynthesis; hydrogen sulfide from sulfite (NADPH route): step 1/1. Functionally, component of the sulfite reductase complex that catalyzes the 6-electron reduction of sulfite to sulfide. This is one of several activities required for the biosynthesis of L-cysteine from sulfate. The flavoprotein component catalyzes the electron flow from NADPH -&gt; FAD -&gt; FMN to the hemoprotein component. This is Sulfite reductase [NADPH] flavoprotein alpha-component from Escherichia coli O6:K15:H31 (strain 536 / UPEC).